A 237-amino-acid chain; its full sequence is Class B acid phosphatase (237 aa).

The signal sequence occupies residues 1 to 25 (MRKLTLAFAAASLLFTLNSAVVARA). Catalysis depends on Asp69, which acts as the Nucleophile. Mg(2+) contacts are provided by Asp69 and Asp71. Asp71 serves as the catalytic Proton donor. Substrate is bound by residues 137–138 (TG) and Lys177. Mg(2+) is bound at residue Asp192.

Belongs to the class B bacterial acid phosphatase family. In terms of assembly, homotetramer. It depends on Mg(2+) as a cofactor.

Its subcellular location is the periplasm. The enzyme catalyses a phosphate monoester + H2O = an alcohol + phosphate. Functionally, dephosphorylates several organic phosphate monoesters. Also has a phosphotransferase activity catalyzing the transfer of low-energy phosphate groups from organic phosphate monoesters to free hydroxyl groups of various organic compounds. In Klebsiella pneumoniae (strain 342), this protein is Class B acid phosphatase.